Consider the following 311-residue polypeptide: Syndecan-1 (311 aa).

The signal sequence occupies residues 1–22 (MRRAALWLWLCALALRLQPALL). Residues 23–255 (HSVAVNMPPE…GLLDRKEVLG (233 aa)) are Extracellular-facing. 2 disordered regions span residues 31–85 (PEDQ…PDAI) and 141–244 (TMAP…TGAS). Over residues 32–42 (EDQDGSGDDSD) the composition is skewed to acidic residues. Residue Ser37 is glycosylated (O-linked (Xyl...) (chondroitin sulfate) serine). A glycan (N-linked (GlcNAc...) asparagine) is linked at Asn43. O-linked (Xyl...) (heparan sulfate) serine glycans are attached at residues Ser45 and Ser47. Residues 71–84 (TTTATAPEPTSPDA) are compositionally biased toward low complexity. Basic and acidic residues-rich tracts occupy residues 151–162 (PHRDVQPDHHET) and 169–180 (GRMEPHRPHVEE). 2 O-linked (Xyl...) (chondroitin sulfate) serine glycosylation sites follow: Ser204 and Ser214. The span at 215–226 (GENAAGAAGEPG) shows a compositional bias: low complexity. A helical membrane pass occupies residues 256-276 (GVIAGGLVGLIFAVCLVGFML). The Cytoplasmic portion of the chain corresponds to 277–311 (YRMKKKDEGSYSLEEPKQANGGAYQKPTKQEEFYA). The disordered stretch occupies residues 285–311 (GSYSLEEPKQANGGAYQKPTKQEEFYA). Ser286 bears the Phosphoserine mark.

It belongs to the syndecan proteoglycan family. In terms of assembly, interacts with CDCP1. Interacts (via C-terminus) with TIAM1 (via PDZ domain). Interacts with MDK. In terms of processing, shedding is enhanced by a number of factors such as heparanase, thrombin or EGF. Also by stress and wound healing. PMA-mediated shedding is inhibited by TIMP3.

Its subcellular location is the membrane. The protein resides in the secreted. The protein localises to the extracellular exosome. Its function is as follows. Cell surface proteoglycan that contains both heparan sulfate and chondroitin sulfate and that links the cytoskeleton to the interstitial matrix. Regulates exosome biogenesis in concert with SDCBP and PDCD6IP. Able to induce its own expression in dental mesenchymal cells and also in the neighboring dental epithelial cells via an MSX1-mediated pathway. This Bos taurus (Bovine) protein is Syndecan-1.